A 442-amino-acid chain; its full sequence is MAMFGFPHWQLKSTSTESGVVAPDERLPFAQTAVMGVQHAVAMFGATVLMPILMGLDPNLSILMSGIGTLLFFFITGGRVPSYLGSSAAFVGVVIAATGFNGQGINPNISIALGGIIACGLVYTVIGLVVMKIGTRWIERLMPPVVTGAVVMAIGLNLAPIAVKSVSASAFDSWMAVMTVLCIGLVAVFTRGMIQRLLILVGLIVACLLYGVMTNVLGLGKAVDFTLVSHAAWFGLPHFSTPAFNGQAMMLIAPVAVILVAENLGHLKAVAGMTGRNMDPYMGRAFVGDGLATMLSGSVGGSGVTTYAENIGVMAVTKVYSTLVFVAAAVIAMLLGFSPKFGALIHTIPAAVIGGASIVVFGLIAVAGARIWVQNRVDLSQNGNLIMVAVTLVLGAGDFALTLGGFTLGGIGTATFGAILLNALLSRKLVDVPPPEVVHQEP.

At 1–57 the chain is on the cytoplasmic side; sequence MAMFGFPHWQLKSTSTESGVVAPDERLPFAQTAVMGVQHAVAMFGATVLMPILMGLD. Residues 58–78 traverse the membrane as a helical segment; it reads PNLSILMSGIGTLLFFFITGG. Arg79 is a topological domain (periplasmic). Residues 80–100 form a helical membrane-spanning segment; the sequence is VPSYLGSSAAFVGVVIAATGF. Over 101-110 the chain is Cytoplasmic; the sequence is NGQGINPNIS. A helical membrane pass occupies residues 111–131; it reads IALGGIIACGLVYTVIGLVVM. Residues 132–140 lie on the Periplasmic side of the membrane; that stretch reads KIGTRWIER. A helical membrane pass occupies residues 141–161; it reads LMPPVVTGAVVMAIGLNLAPI. Residues 162–169 lie on the Cytoplasmic side of the membrane; it reads AVKSVSAS. The chain crosses the membrane as a helical span at residues 170–190; the sequence is AFDSWMAVMTVLCIGLVAVFT. The Periplasmic portion of the chain corresponds to 191 to 196; that stretch reads RGMIQR. Residues 197–217 traverse the membrane as a helical segment; the sequence is LLILVGLIVACLLYGVMTNVL. Topologically, residues 218–240 are cytoplasmic; that stretch reads GLGKAVDFTLVSHAAWFGLPHFS. The helical transmembrane segment at 241–261 threads the bilayer; sequence TPAFNGQAMMLIAPVAVILVA. At 262–284 the chain is on the periplasmic side; it reads ENLGHLKAVAGMTGRNMDPYMGR. Residues 285 to 305 form a helical membrane-spanning segment; sequence AFVGDGLATMLSGSVGGSGVT. Residues 306 to 318 are Cytoplasmic-facing; it reads TYAENIGVMAVTK. Residues 319 to 339 traverse the membrane as a helical segment; it reads VYSTLVFVAAAVIAMLLGFSP. Over 340-347 the chain is Periplasmic; sequence KFGALIHT. Residues 348-368 traverse the membrane as a helical segment; the sequence is IPAAVIGGASIVVFGLIAVAG. At 369 to 385 the chain is on the cytoplasmic side; it reads ARIWVQNRVDLSQNGNL. 2 helical membrane passes run 386-406 and 407-427; these read IMVA…LGGF and TLGG…LLSR. Topologically, residues 428–442 are cytoplasmic; it reads KLVDVPPPEVVHQEP.

It belongs to the nucleobase:cation symporter-2 (NCS2) (TC 2.A.40) family.

The protein resides in the cell inner membrane. In terms of biological role, may function as a proton-driven pyrimidine uptake system. The sequence is that of Putative pyrimidine permease RutG (rutG) from Escherichia coli (strain K12).